Consider the following 319-residue polypeptide: Coproporphyrin III ferrochelatase 2 (319 aa).

Fe-coproporphyrin III is bound by residues Tyr13, Arg30, 46–47, Ser54, and Tyr125; that span reads RY. Fe(2+) is bound by residues His181 and Glu262.

The protein belongs to the ferrochelatase family.

Its subcellular location is the cytoplasm. The enzyme catalyses Fe-coproporphyrin III + 2 H(+) = coproporphyrin III + Fe(2+). The protein operates within porphyrin-containing compound metabolism; protoheme biosynthesis. Involved in coproporphyrin-dependent heme b biosynthesis. Catalyzes the insertion of ferrous iron into coproporphyrin III to form Fe-coproporphyrin III. The protein is Coproporphyrin III ferrochelatase 2 of Bacillus cereus (strain ZK / E33L).